We begin with the raw amino-acid sequence, 269 residues long: Protein TORNADO 2 (269 aa).

Over 1–10 (MPLSNNVIGC) the chain is Cytoplasmic. The chain crosses the membrane as a helical span at residues 11–31 (INFITVLLSIPVIGAGIWLAI). Residues 32 to 44 (GTVNSCVKLLQWP) lie on the Extracellular side of the membrane. A helical membrane pass occupies residues 45–65 (VIILGVLILLVGLAGFIGGFW). At 66-71 (RITWLL) the chain is on the cytoplasmic side. The chain crosses the membrane as a helical span at residues 72–92 (VVYLIAMLILIVLLGCLVGFI). Topologically, residues 93–231 (YMVTIRGSGH…NIKVDWLKAD (139 aa)) are extracellular. N-linked (GlcNAc...) asparagine glycosylation occurs at asparagine 200. The helical transmembrane segment at 232 to 252 (IFLLLALIGLIIVYIIGCCAF) threads the bilayer. Topologically, residues 253–269 (RNAETEDIFRKYKQGYT) are cytoplasmic.

This sequence belongs to the tetraspanin (TM4SF) family. Expressed in seedlings, roots, leaves, stems, apex, siliques and flowers. Present in ovules, prominently in nucellus and integuments.

The protein resides in the membrane. Its function is as follows. Involved in the basipetal transport of auxin (IAA) that modulates growth and organs organization, as well as cell differentiation. Regulates shoot apical meristem (SAM) organization in the peripheral zone. Required for initial meristematic divisions in the epidermal/lateral root cap leading to the formation of epidermal cells and a clone of lateral root cap cells, as well as for the maintenance of the radial pattern of cell specification in the root, thus regulating the distinction between the lateral root cap and epidermis. Together with WIH peptides, promotes megasporogenesis. This is Protein TORNADO 2 (TRN2) from Arabidopsis thaliana (Mouse-ear cress).